Consider the following 1044-residue polypeptide: Translation initiation factor IF-2 (1044 aa).

The tract at residues 31 to 425 (VRSASSTVEP…RKSKRAKRQE (395 aa)) is disordered. Pro residues-rich tracts occupy residues 77 to 98 (GPAP…PQPA) and 106 to 116 (APAPAPAPRPA). The segment covering 117–148 (EPAANPAPAAPPAFQAPAPAPAERPAAAQRPA) has biased composition (low complexity). The segment covering 168-185 (GGPGQGPRPGARPGGPGA) has biased composition (gly residues). The span at 204 to 247 (GPGDRPERSERPDRGDRPQGDRPRSDRPQGERQQGDRPQGDRPG) shows a compositional bias: basic and acidic residues. A compositionally biased stretch (low complexity) spans 285-304 (GGAPRPGNNPFASNQGMPRP). Residues 305-328 (QGGPRPTPAGPGGPRPGGPRPNPG) show a composition bias toward pro residues. Residues 329–338 (MMPARPTVGR) are compositionally biased toward low complexity. Residues 339-409 (PGAGPGAGRP…GTQGAFGRAG (71 aa)) show a composition bias toward gly residues. A compositionally biased stretch (basic residues) spans 413 to 422 (VRGRKSKRAK). The tr-type G domain occupies 537-709 (ARPPVVTVMG…VLLTADASLD (173 aa)). The G1 stretch occupies residues 546–553 (GHVDHGKT). 546–553 (GHVDHGKT) contributes to the GTP binding site. Residues 571–575 (GITQH) form a G2 region. A G3 region spans residues 596–599 (DTPG). GTP is bound by residues 596–600 (DTPGH) and 650–653 (NKVD). Residues 650-653 (NKVD) are G4. Positions 686 to 688 (SAR) are G5.

It belongs to the TRAFAC class translation factor GTPase superfamily. Classic translation factor GTPase family. IF-2 subfamily.

It is found in the cytoplasm. In terms of biological role, one of the essential components for the initiation of protein synthesis. Protects formylmethionyl-tRNA from spontaneous hydrolysis and promotes its binding to the 30S ribosomal subunits. Also involved in the hydrolysis of GTP during the formation of the 70S ribosomal complex. This chain is Translation initiation factor IF-2, found in Kineococcus radiotolerans (strain ATCC BAA-149 / DSM 14245 / SRS30216).